A 263-amino-acid polypeptide reads, in one-letter code: 3-deoxy-manno-octulosonate cytidylyltransferase (263 aa).

It belongs to the KdsB family.

The protein localises to the cytoplasm. The catalysed reaction is 3-deoxy-alpha-D-manno-oct-2-ulosonate + CTP = CMP-3-deoxy-beta-D-manno-octulosonate + diphosphate. The protein operates within nucleotide-sugar biosynthesis; CMP-3-deoxy-D-manno-octulosonate biosynthesis; CMP-3-deoxy-D-manno-octulosonate from 3-deoxy-D-manno-octulosonate and CTP: step 1/1. It functions in the pathway bacterial outer membrane biogenesis; lipopolysaccharide biosynthesis. Functionally, activates KDO (a required 8-carbon sugar) for incorporation into bacterial lipopolysaccharide in Gram-negative bacteria. The sequence is that of 3-deoxy-manno-octulosonate cytidylyltransferase from Burkholderia multivorans (strain ATCC 17616 / 249).